The following is a 512-amino-acid chain: PTS system mannitol-specific EIICB component (512 aa).

Residues 1–28 (MSQTEEKKGIGRRVQAFGSFLSSMIMPN) lie on the Cytoplasmic side of the membrane. Positions 17–349 (FGSFLSSMIM…MKFTKEPKQD (333 aa)) constitute a PTS EIIC type-2 domain. A helical transmembrane segment spans residues 29-50 (IGAFIAWGFIAAIFIDNGWFPN). The Extracellular portion of the chain corresponds to 51 to 54 (KDLA). A helical transmembrane segment spans residues 55–75 (TLAGPMITYLIPLLIAFSGGR). The Cytoplasmic portion of the chain corresponds to 76–139 (LIYDLRGGII…QGFEMLFNNF (64 aa)). The chain crosses the membrane as a helical span at residues 140 to 161 (SAGILGFIMTIAGFKILAPLMK). At 162 to 170 (FIMHILSVA) the chain is on the extracellular side. A helical membrane pass occupies residues 171–191 (VEALVHAHLLPLVSILVEPAK). The Cytoplasmic portion of the chain corresponds to 192 to 278 (IVFLNNAINH…VLMRPLLFIA (87 aa)). A helical membrane pass occupies residues 279 to 298 (VILGGMTGVATYQATGFGFK). Topologically, residues 299-318 (SPASPGSFIVYCLNAPRGEF) are extracellular. The helical transmembrane segment at 319-340 (LHMLLGVFLATLVSFVVAALIM) threads the bilayer. Topologically, residues 341–512 (KFTKEPKQDL…LNNLKKDDQA (172 aa)) are cytoplasmic. Positions 365–376 (SSVASKLVSSDK) are enriched in low complexity. The segment at 365–401 (SSVASKLVSSDKNVNTEENASGNVSETSSLDDDPEAL) is disordered. The span at 380–392 (TEENASGNVSETS) shows a compositional bias: polar residues. One can recognise a PTS EIIB type-2 domain in the interval 419–512 (NHVIFACDAG…LNNLKKDDQA (94 aa)). Cys425 serves as the catalytic Phosphocysteine intermediate; for EIIB activity. The residue at position 425 (Cys425) is a Phosphocysteine; by EIIA.

Homodimer.

The protein resides in the cell membrane. The catalysed reaction is D-mannitol(out) + N(pros)-phospho-L-histidyl-[protein] = D-mannitol 1-phosphate(in) + L-histidyl-[protein]. Functionally, the phosphoenolpyruvate-dependent sugar phosphotransferase system (sugar PTS), a major carbohydrate active transport system, catalyzes the phosphorylation of incoming sugar substrates concomitantly with their translocation across the cell membrane. The enzyme II CmtAB PTS system is involved in D-mannitol transport. The protein is PTS system mannitol-specific EIICB component (mtlA) of Staphylococcus aureus (strain MRSA252).